Here is a 474-residue protein sequence, read N- to C-terminus: Salutaridinol 7-O-acetyltransferase (474 aa).

H163 serves as the catalytic Proton acceptor. The tract at residues 213 to 234 (ERLTSPSGMSEIPFSSTPEDTE) is disordered. The segment covering 214–230 (RLTSPSGMSEIPFSSTP) has biased composition (polar residues). The active-site Proton acceptor is the D416.

This sequence belongs to the plant acyltransferase family. In terms of tissue distribution, expressed in root, stem, leaf and capsule of the mature plant. Restricted to sieve elements of the phloem adjacent or proximal to laticifers.

It carries out the reaction (7S)-salutaridinol + acetyl-CoA = (7S)-O-acetylsalutaridinol + CoA. It participates in alkaloid biosynthesis; morphine biosynthesis. In terms of biological role, acetyltransferase involved in biosynthesis of morphinan-type benzylisoquinoline and opiate alkaloids natural products. Catalyzes the conversion of the phenanthrene alkaloid salutaridinol to salutaridinol-7-O-acetate, the immediate precursor of thebaine along the morphine biosynthetic pathway. Conversion of 7-O-acetylsalutaridinol into thebaine is spontaneous. This chain is Salutaridinol 7-O-acetyltransferase, found in Papaver somniferum (Opium poppy).